A 137-amino-acid polypeptide reads, in one-letter code: Neutral phospholipase A2 ammodytin I2 (137 aa).

Positions 1-16 (MRTLWIVAVCLIGVEG) are cleaved as a signal peptide. 7 disulfides stabilise this stretch: Cys-42–Cys-131, Cys-44–Cys-60, Cys-59–Cys-111, Cys-65–Cys-137, Cys-66–Cys-104, Cys-73–Cys-97, and Cys-91–Cys-102. Ca(2+) contacts are provided by Tyr-43, Gly-45, and Gly-47. Residue His-63 is part of the active site. A Ca(2+)-binding site is contributed by Asp-64. The active site involves Asp-105.

It belongs to the phospholipase A2 family. Group II subfamily. D49 sub-subfamily. The cofactor is Ca(2+). Expressed by the venom gland.

It localises to the secreted. It catalyses the reaction a 1,2-diacyl-sn-glycero-3-phosphocholine + H2O = a 1-acyl-sn-glycero-3-phosphocholine + a fatty acid + H(+). Snake venom phospholipase A2 (PLA2) that has enzymatic activity but is non-toxic. Displays low binding affinity and enzymatic activity on phosphatidylserine-containing vesicles and HEK-293 plasma membranes, in contrast to ammodytoxins that have high activity on these phospholipids. PLA2 catalyzes the calcium-dependent hydrolysis of the 2-acyl groups in 3-sn-phosphoglycerides. The polypeptide is Neutral phospholipase A2 ammodytin I2 (Vipera ammodytes ammodytes (Western sand viper)).